The sequence spans 134 residues: (R)-specific enoyl-CoA hydratase (134 aa).

Residues 5–119 form the MaoC-like domain; sequence SLEVGQKARL…ATLTTRIFTQ (115 aa). A (3R)-3-hydroxyacyl-CoA contacts are provided by residues 32 to 37, Gly-55, and Phe-84; that span reads DFNPLH.

As to quaternary structure, homodimer.

The catalysed reaction is a (3R)-3-hydroxyacyl-CoA = a (2E)-enoyl-CoA + H2O. In terms of biological role, catalyzes the hydration of trans-2-enoyl-CoA with a chain-length of 4-6 carbon atoms, forming the corresponding (3R)-3-hydroxyacyl-CoA. The sequence is that of (R)-specific enoyl-CoA hydratase (phaJ) from Aeromonas caviae (Aeromonas punctata).